Reading from the N-terminus, the 845-residue chain is Krueppel homolog 1 (845 aa).

Residues 141-164 are disordered; it reads QKQQQQQQHESITNAAPTAAPSAQ. 8 consecutive C2H2-type zinc fingers follow at residues 194 to 216, 271 to 293, 299 to 321, 327 to 349, 355 to 377, 383 to 407, 413 to 435, and 441 to 463; these read FKCD…TKSH, YQCN…YRTH, FECE…RRIH, YKCD…MRIH, HKCS…MRTH, YKCP…SRTH, YHCD…RVQH, and YKCT…IKGH. Disordered stretches follow at residues 469–610 and 757–845; these read DDEA…VQGQ and GLRS…AKAS. Composition is skewed to low complexity over residues 474–491, 498–508, and 532–559; these read AAAA…SAGS, SSNSESSNHSP, and ATLS…SSMA. Residues 582-591 show a composition bias toward polar residues; it reads SGVSSAQPAH. Low complexity predominate over residues 759-775; that stretch reads RSSTESPERSSSPESDS. Residues 796–809 show a composition bias toward basic and acidic residues; it reads NKGDDGQVDSEKAS. Residues 810 to 823 show a composition bias toward low complexity; the sequence is GDGTSAAGGAASVG.

Belongs to the krueppel C2H2-type zinc-finger protein family.

Its function is as follows. Plays a general role in the hierarchies of gene expression leading to metamorphosis. This is Krueppel homolog 1 (Kr-h1) from Drosophila melanogaster (Fruit fly).